Reading from the N-terminus, the 418-residue chain is Deubiquitinase and deneddylase Dub1 (418 aa).

Polar residues predominate over residues 1–10 (MLSPTNSISK). Positions 1–23 (MLSPTNSISKTAPVPPQDSSKPV) are disordered. The helical transmembrane segment at 40–60 (TALAVLLVVVTLGLILLFYSF) threads the bilayer. A disordered region spans residues 72–144 (TRPSTKEQPT…PLPPKAPKPV (73 aa)). The span at 86–141 (VPLPSPPLAVPRPSTPPPPVISRPSTPPAPTPAISPPSTPSAPKPSTPPPLPPKAP) shows a compositional bias: pro residues. Active-site residues include H288, D305, and C358.

This sequence belongs to the peptidase C48 family.

It is found in the secreted. It localises to the host cell. The protein localises to the membrane. Effector proteins function to alter host cell physiology and promote bacterial survival in host tissues. This protease possesses deubiquitinating and deneddylating activities. This is Deubiquitinase and deneddylase Dub1 (cdu1) from Chlamydia trachomatis serovar B (strain TZ1A828/OT).